Here is a 197-residue protein sequence, read N- to C-terminus: Beta-crystallin A2 (197 aa).

An N-terminal arm region spans residues 1–11; it reads MSSAPAPGSAP. 2 consecutive Beta/gamma crystallin 'Greek key' domains span residues 12–52 and 53–99; these read VCLT…KVEN and GAWV…RPVL. The tract at residues 100 to 105 is connecting peptide; that stretch reads CANHSD. 2 Beta/gamma crystallin 'Greek key' domains span residues 106 to 147 and 148 to 196; these read SRVT…KVSS and GAWV…RRVQ.

The protein belongs to the beta/gamma-crystallin family. In terms of assembly, homo/heterodimer, or complexes of higher-order. The structure of beta-crystallin oligomers seems to be stabilized through interactions between the N-terminal arms.

Its function is as follows. Crystallins are the dominant structural components of the vertebrate eye lens. The sequence is that of Beta-crystallin A2 (Cryba2) from Mus musculus (Mouse).